Consider the following 179-residue polypeptide: dCTP deaminase (179 aa).

DCTP is bound by residues 101–106 and aspartate 117; that span reads RSTLAR. Glutamate 127 functions as the Proton donor/acceptor in the catalytic mechanism. Glutamine 165 lines the dCTP pocket.

The protein belongs to the dCTP deaminase family. In terms of assembly, homotrimer.

The enzyme catalyses dCTP + H2O + H(+) = dUTP + NH4(+). It participates in pyrimidine metabolism; dUMP biosynthesis; dUMP from dCTP (dUTP route): step 1/2. Catalyzes the deamination of dCTP to dUTP. The chain is dCTP deaminase from Caldivirga maquilingensis (strain ATCC 700844 / DSM 13496 / JCM 10307 / IC-167).